Reading from the N-terminus, the 274-residue chain is MRFRPSIVALLSVCFGLLTFLYSGSAFAVDKSQLTYDDIVNTGLANVCPEISSFTRGTIEVEPNTKYFVSDFCMEPQEYFVKEEPVNKRQKAEYVKGKVLTRQTTSLEQIRGSIAVGADGTLTFKEKDGIDFQPITVLLPGGEEVPFFFTVKNFTGTTEPGFTSINSSTDFVGDFNVPSYRGAGFLDPKARGLYTGYDNAVALPSAADKFRTNKKETPLGKGTLSLQVTQVDGSTGEIAGIFESEQPSDTDLGAKEPLDVKVRGIFYGRVDTDV.

The N-terminal stretch at 1 to 28 (MRFRPSIVALLSVCFGLLTFLYSGSAFA) is a signal peptide.

The protein belongs to the PsbO family. PSII is composed of 1 copy each of membrane proteins PsbA, PsbB, PsbC, PsbD, PsbE, PsbF, PsbH, PsbI, PsbJ, PsbK, PsbL, PsbM, PsbT, PsbX, PsbY, PsbZ, Psb30/Ycf12, peripheral proteins PsbO, CyanoQ (PsbQ), PsbU, PsbV and a large number of cofactors. It forms dimeric complexes. Contacts PsbQ.

The protein localises to the cellular thylakoid membrane. Its function is as follows. One of the extrinsic, lumenal subunits of photosystem II (PSII), which stabilize and protect the oxygen-evolving complex. PSII is a light-driven water plastoquinone oxidoreductase, using light energy to abstract electrons from H(2)O, generating a proton gradient subsequently used for ATP formation. Required for dimerization of PSII and for binding of PsbQ to PSII. The chain is Photosystem II extrinsic protein O from Synechocystis sp. (strain ATCC 27184 / PCC 6803 / Kazusa).